The chain runs to 106 residues: Large ribosomal subunit protein bL21 (106 aa).

This sequence belongs to the bacterial ribosomal protein bL21 family. Part of the 50S ribosomal subunit. Contacts protein L20.

Functionally, this protein binds to 23S rRNA in the presence of protein L20. In Chlamydia pneumoniae (Chlamydophila pneumoniae), this protein is Large ribosomal subunit protein bL21.